The following is a 289-amino-acid chain: Heme oxygenase 1 (289 aa).

Residues 1 to 12 (MERPQPDSSMPQ) are compositionally biased toward polar residues. The segment at 1–24 (MERPQPDSSMPQDLSEALKEATKE) is disordered. Over 1–266 (MERPQPDSSM…KPQPSVLSQA (266 aa)) the chain is Cytoplasmic. Heme b-binding residues include Lys19, His26, Tyr135, and Arg184. Residues 239–261 (RRAGSKVQDLAPTKASRGKPQPS) are disordered. Ser243 carries the phosphoserine modification. A helical; Anchor for type IV membrane protein membrane pass occupies residues 267–289 (PLLRWVLTLSFLVATVAVGLYAM).

It belongs to the heme oxygenase family. Homodimer and higher order homooligomer. Oligomerization is crucial for its stability and function in the endoplasmic reticulum. Interacts with FLVCR2; this interaction is potentiated in the presence of heme. A soluble form arises by proteolytic removal of the membrane anchor.

The protein localises to the endoplasmic reticulum membrane. The catalysed reaction is heme b + 3 reduced [NADPH--hemoprotein reductase] + 3 O2 = biliverdin IXalpha + CO + Fe(2+) + 3 oxidized [NADPH--hemoprotein reductase] + 3 H2O + H(+). Inhibited by metalloporphyrins such as Sn-, Co-, Mn- and Zn-protoporphyrins. Its function is as follows. Catalyzes the oxidative cleavage of heme at the alpha-methene bridge carbon, released as carbon monoxide (CO), to generate biliverdin IXalpha, while releasing the central heme iron chelate as ferrous iron. Affords protection against programmed cell death and this cytoprotective effect relies on its ability to catabolize free heme and prevent it from sensitizing cells to undergo apoptosis. In terms of biological role, catalyzes the oxidative cleavage of heme at the alpha-methene bridge carbon, released as carbon monoxide (CO), to generate biliverdin IXalpha, while releasing the central heme iron chelate as ferrous iron. This is Heme oxygenase 1 (HMOX1) from Bos taurus (Bovine).